The following is a 299-amino-acid chain: Oxygen-dependent coproporphyrinogen-III oxidase (299 aa).

Ser-92 lines the substrate pocket. 2 residues coordinate a divalent metal cation: His-96 and His-106. Residue His-106 is the Proton donor of the active site. Position 108 to 110 (Asn-108 to Arg-110) interacts with substrate. 2 residues coordinate a divalent metal cation: His-145 and His-175. The important for dimerization stretch occupies residues Tyr-240–Glu-275. Gly-258–Arg-260 lines the substrate pocket.

The protein belongs to the aerobic coproporphyrinogen-III oxidase family. In terms of assembly, homodimer. It depends on a divalent metal cation as a cofactor.

The protein localises to the cytoplasm. The enzyme catalyses coproporphyrinogen III + O2 + 2 H(+) = protoporphyrinogen IX + 2 CO2 + 2 H2O. It functions in the pathway porphyrin-containing compound metabolism; protoporphyrin-IX biosynthesis; protoporphyrinogen-IX from coproporphyrinogen-III (O2 route): step 1/1. In terms of biological role, involved in the heme biosynthesis. Catalyzes the aerobic oxidative decarboxylation of propionate groups of rings A and B of coproporphyrinogen-III to yield the vinyl groups in protoporphyrinogen-IX. This is Oxygen-dependent coproporphyrinogen-III oxidase from Salmonella schwarzengrund (strain CVM19633).